Reading from the N-terminus, the 315-residue chain is Homoserine kinase (315 aa).

Position 97–107 (97–107 (PPARGLGSSAT)) interacts with ATP.

Belongs to the GHMP kinase family. Homoserine kinase subfamily.

The protein localises to the cytoplasm. It carries out the reaction L-homoserine + ATP = O-phospho-L-homoserine + ADP + H(+). It participates in amino-acid biosynthesis; L-threonine biosynthesis; L-threonine from L-aspartate: step 4/5. Functionally, catalyzes the ATP-dependent phosphorylation of L-homoserine to L-homoserine phosphate. The protein is Homoserine kinase of Prochlorococcus marinus (strain MIT 9301).